The chain runs to 119 residues: Large ribosomal subunit protein bL20 (119 aa).

It belongs to the bacterial ribosomal protein bL20 family.

Functionally, binds directly to 23S ribosomal RNA and is necessary for the in vitro assembly process of the 50S ribosomal subunit. It is not involved in the protein synthesizing functions of that subunit. The polypeptide is Large ribosomal subunit protein bL20 (Chloroflexus aurantiacus (strain ATCC 29366 / DSM 635 / J-10-fl)).